The following is a 124-amino-acid chain: Late histone H2B.2.1 (124 aa).

Residues 1–32 (MPAKQTSGKGAKKAGKAKGRPAGASKTRRRKR) are disordered. Residues 10-19 (GAKKAGKAKG) show a composition bias toward basic residues. Ser111 carries O-linked (GlcNAc) serine glycosylation. Residue Lys119 forms a Glycyl lysine isopeptide (Lys-Gly) (interchain with G-Cter in ubiquitin) linkage.

Belongs to the histone H2B family. As to quaternary structure, the nucleosome is a histone octamer containing two molecules each of H2A, H2B, H3 and H4 assembled in one H3-H4 heterotetramer and two H2A-H2B heterodimers. The octamer wraps approximately 147 bp of DNA. Post-translationally, monoubiquitination of Lys-119 gives a specific tag for epigenetic transcriptional activation and is also prerequisite for histone H3 'Lys-4' and 'Lys-79' methylation. GlcNAcylation at Ser-111 promotes monoubiquitination of Lys-119. It fluctuates in response to extracellular glucose, and associates with transcribed genes.

The protein localises to the nucleus. It localises to the chromosome. In terms of biological role, core component of nucleosome. Nucleosomes wrap and compact DNA into chromatin, limiting DNA accessibility to the cellular machineries which require DNA as a template. Histones thereby play a central role in transcription regulation, DNA repair, DNA replication and chromosomal stability. DNA accessibility is regulated via a complex set of post-translational modifications of histones, also called histone code, and nucleosome remodeling. The polypeptide is Late histone H2B.2.1 (Psammechinus miliaris (Green sea urchin)).